We begin with the raw amino-acid sequence, 165 residues long: Small ribosomal subunit protein uS5 (165 aa).

The S5 DRBM domain maps to 10–73 (LVEKLVSVDR…EAAKRNMITV (64 aa)).

This sequence belongs to the universal ribosomal protein uS5 family. In terms of assembly, part of the 30S ribosomal subunit. Contacts proteins S4 and S8.

In terms of biological role, with S4 and S12 plays an important role in translational accuracy. Functionally, located at the back of the 30S subunit body where it stabilizes the conformation of the head with respect to the body. This Psychrobacter sp. (strain PRwf-1) protein is Small ribosomal subunit protein uS5.